Consider the following 735-residue polypeptide: Protein PAT1 homolog 2 (735 aa).

Disordered regions lie at residues 39 to 93 and 336 to 366; these read TFGL…REVK and QLHP…PDPY. Composition is skewed to basic and acidic residues over residues 49-59 and 67-93; these read EPTKQEEDHKK and PKIE…REVK. Residues 346-356 show a composition bias toward low complexity; it reads SQRQRPQSSSR.

Belongs to the PAT1 family. As to quaternary structure, interacts with ribonucleoprotein complex components. Interacts with cpeb.

Its subcellular location is the cytoplasm. The protein resides in the nucleus. Its function is as follows. RNA-binding protein that acts as a translational repressor. This is Protein PAT1 homolog 2 (patl2) from Xenopus tropicalis (Western clawed frog).